A 146-amino-acid chain; its full sequence is Ribosomal RNA large subunit methyltransferase H (146 aa).

Residues L68, G95, and 114–119 (LSSLTF) each bind S-adenosyl-L-methionine.

The protein belongs to the RNA methyltransferase RlmH family. In terms of assembly, homodimer.

It localises to the cytoplasm. It carries out the reaction pseudouridine(1915) in 23S rRNA + S-adenosyl-L-methionine = N(3)-methylpseudouridine(1915) in 23S rRNA + S-adenosyl-L-homocysteine + H(+). Functionally, specifically methylates the pseudouridine at position 1915 (m3Psi1915) in 23S rRNA. In Thermodesulfovibrio yellowstonii (strain ATCC 51303 / DSM 11347 / YP87), this protein is Ribosomal RNA large subunit methyltransferase H.